The chain runs to 304 residues: Peroxisomal membrane protein 13 (304 aa).

Disordered stretches follow at residues 1–78 (MASQ…WEQQ) and 258–304 (PRKM…VWGN). 2 stretches are compositionally biased toward polar residues: residues 19–44 (NTSG…SGTA) and 56–67 (RPNTAANMNSLS). Positions 262–279 (QQPPQGPNGLPLPHQPHG) are enriched in low complexity.

This sequence belongs to the peroxin-13 family. Interacts with PEX14; forming the PEX13-PEX14 docking complex. Interacts (via N-terminus) with PEX7, but not with PEX5. Interacts with APEM9 (via N-terminus). As to expression, highly expressed in pollen. Detected in shoots, roots, stems, leaves, inflorescences and emasculated postils. Strongly expressed in both male and female gametophytes during fertilization.

The protein localises to the peroxisome membrane. Its function is as follows. Component of the PEX13-PEX14 docking complex, a translocon channel that specifically mediates the import of peroxisomal cargo proteins bound to PEX5 receptor. The PEX13-PEX14 docking complex forms a large import pore which can be opened to a diameter of about 9 nm. Mechanistically, PEX5 receptor along with cargo proteins associates with the PEX14 subunit of the PEX13-PEX14 docking complex in the cytosol, leading to the insertion of the receptor into the organelle membrane with the concomitant translocation of the cargo into the peroxisome matrix. Essential for pollen-tube discharge that take place only in the presence of functional peroxisomes in either the male or the female gametophyte. The sequence is that of Peroxisomal membrane protein 13 from Arabidopsis thaliana (Mouse-ear cress).